The primary structure comprises 230 residues: V-type proton ATPase subunit E (230 aa).

This sequence belongs to the V-ATPase E subunit family. V-ATPase is a heteromultimeric enzyme composed of a peripheral catalytic V1 complex (components A to H) attached to an integral membrane V0 proton pore complex (components: a, c, c', c'' and d).

Functionally, subunit of the peripheral V1 complex of vacuolar ATPase essential for assembly or catalytic function. V-ATPase is responsible for acidifying a variety of intracellular compartments in eukaryotic cells. The protein is V-type proton ATPase subunit E (VATE) of Citrus unshiu (Satsuma mandarin).